The following is a 473-amino-acid chain: Cannabinoid receptor 1 (473 aa).

At 1 to 121 (MKSILDGLAD…LNPSQQLAIA (121 aa)) the chain is on the extracellular side. The tract at residues 2-23 (KSILDGLADTTFRTITTDLLYV) is required for mitochondrial localization. N-linked (GlcNAc...) asparagine glycans are attached at residues Asn-78 and Asn-84. A helical membrane pass occupies residues 122–142 (VLSLTLGTFTVLENLLVLCVI). The Cytoplasmic portion of the chain corresponds to 143-155 (LHSRSLRCRPSYH). The chain crosses the membrane as a helical span at residues 156-176 (FIGSLAVADLLGSVIFVYSFV). The Extracellular segment spans residues 177 to 188 (DFHVFHRKDSPN). Residues 189 to 209 (VFLFKLGGVTASFTASVGSLF) form a helical membrane-spanning segment. Over 210–233 (LTAIDRYISIHRPLAYKRIVTRPK) the chain is Cytoplasmic. The chain crosses the membrane as a helical span at residues 234–254 (AVVAFCLMWTIAIVIAVLPLL). The Extracellular portion of the chain corresponds to 255 to 278 (GWNCKKLQSVCSDIFPLIDETYLM). Residues 279 to 299 (FWIGVTSVLLLFIVYAYMYIL) form a helical membrane-spanning segment. Residues 300-345 (WKAHSHAVRMIQRGTQKSIIIHTSEDGKVQVTRPDQARMDIRLAKT) lie on the Cytoplasmic side of the membrane. Residues 346–366 (LVLILVVLIICWGPLLAIMVY) form a helical membrane-spanning segment. The Extracellular portion of the chain corresponds to 367–378 (DVFGKMNKLIKT). A helical transmembrane segment spans residues 379–399 (VFAFCSMLCLLNSTVNPIIYA). Topologically, residues 400–473 (LRSKDLRHAF…VSTDTSAEAL (74 aa)) are cytoplasmic. Cys-416 carries the S-palmitoyl cysteine lipid modification. Phosphoserine is present on residues Ser-426 and Ser-430.

Belongs to the G-protein coupled receptor 1 family. As to quaternary structure, interacts (via C-terminus) with CNRIP1. Associates with G protein alpha subunits, including G(i) alpha-1/GNAI1, G(i) alpha-3/GNAI3 and G(o)-alpha/GNAO1; palmitoylation is important for interaction with GNAI3 and GNAO1. Palmitoylation at Cys-416 is important for recruitment at both plasma membrane and lipid rafts and association with G protein alpha subunits. As to expression, expressed in brain neurons (at protein level). Detected throughout the striatum, cortex and hippocampus, with highest levels in the lateral striatum. In rostral brain regions, high expression levels in the dorsal lateral striatum, while in the caudal brain regions, high levels are observed in the ventral lateral striatum. Expressed in neurons. In the hypothalamus, expressed in both GABAergic and glutamatergic presynaptic terminals of POMC neurons (at protein level). Expressed in striated muscles, including skeletal muscles (gastrocnemius and rectus abdominis) and myocardium (at protein level). Expressed in the liver, with highest levels in Kupffer cells and lower levels in endothelial cells as well as hepatocytes, particularly in perivascular areas (at protein level). The hepatic expression level is up-regulated in obese mice compared to lean animals.

It localises to the cell membrane. The protein localises to the mitochondrion outer membrane. Its subcellular location is the cell projection. The protein resides in the axon. It is found in the presynapse. Hemopressin, a peptide derived from hemoglobin subunit alpha (HBA1 and/or HBA2), acts as an antagonist peptide: hemopressin-binding efficiently blocks cannabinoid receptor CNR1 and subsequent signaling. G-protein coupled receptor for cannabinoids, including endocannabinoids (eCBs), such as N-arachidonoylethanolamide (also called anandamide or AEA) and 2-arachidonoylglycerol (2-AG). Mediates many cannabinoid-induced effects, acting, among others, on food intake, memory loss, gastrointestinal motility, catalepsy, ambulatory activity, anxiety, chronic pain. Signaling typically involves reduction in cyclic AMP. In the hypothalamus, may have a dual effect on mitochondrial respiration depending upon the agonist dose and possibly upon the cell type. Increases respiration at low doses, while decreases respiration at high doses. At high doses, CNR1 signal transduction involves G-protein alpha-i protein activation and subsequent inhibition of mitochondrial soluble adenylate cyclase, decrease in cyclic AMP concentration, inhibition of protein kinase A (PKA)-dependent phosphorylation of specific subunits of the mitochondrial electron transport system, including NDUFS2. In the hypothalamus, inhibits leptin-induced reactive oxygen species (ROS) formation and mediates cannabinoid-induced increase in SREBF1 and FASN gene expression. In response to cannabinoids, drives the release of orexigenic beta-endorphin, but not that of melanocyte-stimulating hormone alpha/alpha-MSH, from hypothalamic POMC neurons, hence promoting food intake. In the hippocampus, regulates cellular respiration and energy production in response to cannabinoids. Involved in cannabinoid-dependent depolarization-induced suppression of inhibition (DSI), a process in which depolarization of CA1 postsynaptic pyramidal neurons mobilizes eCBs, which retrogradely activate presynaptic CB1 receptors, transiently decreasing GABAergic inhibitory neurotransmission. Also reduces excitatory synaptic transmission. In superior cervical ganglions and cerebral vascular smooth muscle cells, inhibits voltage-gated Ca(2+) channels in a constitutive, as well as agonist-dependent manner. In cerebral vascular smooth muscle cells, cannabinoid-induced inhibition of voltage-gated Ca(2+) channels leads to vasodilation and decreased vascular tone. Induces leptin production in adipocytes and reduces LRP2-mediated leptin clearance in the kidney, hence participating in hyperleptinemia. In adipose tissue, CNR1 signaling leads to increased expression of SREBF1, ACACA and FASN genes. In the liver, activation by endocannabinoids leads to increased de novo lipogenesis and reduced fatty acid catabolism, associated with increased expression of SREBF1/SREBP-1, GCK, ACACA, ACACB and FASN genes. May also affect de novo cholesterol synthesis and HDL-cholesteryl ether uptake. Peripherally modulates energy metabolism. In high carbohydrate diet-induced obesity, may decrease the expression of mitochondrial dihydrolipoyl dehydrogenase/DLD in striated muscles, as well as that of selected glucose/ pyruvate metabolic enzymes, hence affecting energy expenditure through mitochondrial metabolism. In response to cannabinoid anandamide, elicits a pro-inflammatory response in macrophages, which involves NLRP3 inflammasome activation and IL1B and IL18 secretion. In macrophages infiltrating pancreatic islets, this process may participate in the progression of type-2 diabetes and associated loss of pancreatic beta-cells. The polypeptide is Cannabinoid receptor 1 (Cnr1) (Mus musculus (Mouse)).